The sequence spans 153 residues: Superoxide dismutase [Cu-Zn] (153 aa).

Residues histidine 45 and histidine 47 each coordinate Cu cation. Threonine 53 bears the Phosphothreonine mark. The cysteines at positions 56 and 145 are disulfide-linked. At serine 59 the chain carries Phosphoserine. Histidine 62 contacts Cu cation. Zn(2+) is bound by residues histidine 62, histidine 70, histidine 79, and aspartate 82. Histidine 119 contributes to the Cu cation binding site.

This sequence belongs to the Cu-Zn superoxide dismutase family. Homodimer. Cu cation is required as a cofactor. Zn(2+) serves as cofactor.

The protein localises to the cytoplasm. It carries out the reaction 2 superoxide + 2 H(+) = H2O2 + O2. Destroys radicals which are normally produced within the cells and which are toxic to biological systems. The polypeptide is Superoxide dismutase [Cu-Zn] (Drosophila melanogaster (Fruit fly)).